Here is a 223-residue protein sequence, read N- to C-terminus: Small ribosomal subunit protein uS3 (223 aa).

The KH type-2 domain occupies 39–107; the sequence is IRQFLRKKPS…EVWLEIAEIK (69 aa).

Belongs to the universal ribosomal protein uS3 family. Part of the 30S ribosomal subunit. Forms a tight complex with proteins S10 and S14.

Functionally, binds the lower part of the 30S subunit head. Binds mRNA in the 70S ribosome, positioning it for translation. The protein is Small ribosomal subunit protein uS3 of Chlamydia pneumoniae (Chlamydophila pneumoniae).